The following is a 224-amino-acid chain: 7-cyano-7-deazaguanine synthase (224 aa).

Residue 7-17 (LSGGLDSSTIL) participates in ATP binding. Residues Cys191, Cys199, Cys202, and Cys205 each contribute to the Zn(2+) site.

The protein belongs to the QueC family. Zn(2+) serves as cofactor.

The enzyme catalyses 7-carboxy-7-deazaguanine + NH4(+) + ATP = 7-cyano-7-deazaguanine + ADP + phosphate + H2O + H(+). Its pathway is purine metabolism; 7-cyano-7-deazaguanine biosynthesis. Catalyzes the ATP-dependent conversion of 7-carboxy-7-deazaguanine (CDG) to 7-cyano-7-deazaguanine (preQ(0)). This is 7-cyano-7-deazaguanine synthase from Nostoc punctiforme (strain ATCC 29133 / PCC 73102).